The primary structure comprises 537 residues: DEAD-box ATP-dependent RNA helicase 5 (537 aa).

A disordered region spans residues 1-97 (MAGQKQELPV…EDLGEGESEQ (97 aa)). Residues 22-80 (TNKKKKKSKKNKHTEENHEVEEVPQEVTNGVEEELSNKEKKKKRKREEKESEKNKKKDV) are a coiled coil. Positions 23 to 33 (NKKKKKSKKNK) are enriched in basic residues. Positions 68-87 (EEKESEKNKKKDVPEKKLEA) are enriched in basic and acidic residues. Residues 116–142 (KTFAESNLPENVLDCCKTFEKPSPIQS) carry the Q motif motif. One can recognise a Helicase ATP-binding domain in the interval 145-324 (WPFLLDGRDL…QEFMDPNPIK (180 aa)). 158–165 (AKTGSGKT) contacts ATP. The DEAD box signature appears at 272–275 (DEAD). The region spanning 349-500 (ARDQRLIALL…VVPADLLKFG (152 aa)) is the Helicase C-terminal domain. Serine 533 bears the Phosphoserine mark.

The protein belongs to the DEAD box helicase family. DDX5/DBP2 subfamily.

The protein resides in the nucleus. It is found in the nucleolus. The enzyme catalyses ATP + H2O = ADP + phosphate + H(+). In terms of biological role, ATP-dependent RNA helicase required for 60S ribosomal subunit synthesis. Involved in efficient pre-rRNA processing, predominantly at site A3, which is necessary for the normal formation of 25S and 5.8S rRNAs. The sequence is that of DEAD-box ATP-dependent RNA helicase 5 (RH5) from Arabidopsis thaliana (Mouse-ear cress).